The chain runs to 639 residues: Probable potassium transport system protein Kup 1 (639 aa).

Over residues Met1 to Ser16 the composition is skewed to polar residues. The interval Met1–Ile21 is disordered. Helical transmembrane passes span Leu29 to Phe49, Ile67 to Ile87, Ala117 to Thr137, Pro154 to Val174, Val182 to Leu202, Ile220 to Leu240, Ile260 to Gly280, Ala302 to Ile322, Ile354 to Phe374, Ala383 to Met403, Leu411 to Ser431, and Val436 to Thr456.

It belongs to the HAK/KUP transporter (TC 2.A.72) family.

The protein localises to the cell inner membrane. It catalyses the reaction K(+)(in) + H(+)(in) = K(+)(out) + H(+)(out). Functionally, transport of potassium into the cell. Likely operates as a K(+):H(+) symporter. The protein is Probable potassium transport system protein Kup 1 of Mesorhizobium japonicum (strain LMG 29417 / CECT 9101 / MAFF 303099) (Mesorhizobium loti (strain MAFF 303099)).